The chain runs to 223 residues: UPF0441 protein YgiB (223 aa).

Low complexity predominate over residues Thr-178 to Thr-195. Residues Thr-178–Gly-223 form a disordered region. A compositionally biased stretch (polar residues) spans Ala-204–Gly-223.

The protein belongs to the UPF0441 family.

The chain is UPF0441 protein YgiB from Escherichia coli (strain ATCC 8739 / DSM 1576 / NBRC 3972 / NCIMB 8545 / WDCM 00012 / Crooks).